We begin with the raw amino-acid sequence, 243 residues long: uncharacterized protein (243 aa).

Positions 1 to 18 (MSNSHYNNYQQQQPHSSN) are enriched in low complexity. The disordered stretch occupies residues 1 to 30 (MSNSHYNNYQQQQPHSSNGDPEYQHQQMVH). The 195-residue stretch at 38 to 232 (GHGMKTVAVP…MHYKEYREYQ (195 aa)) folds into the AMMECR1 domain.

This is an uncharacterized protein from Drosophila melanogaster (Fruit fly).